The chain runs to 184 residues: NADH-quinone oxidoreductase subunit B (184 aa).

Residues C37, C38, C103, and C132 each contribute to the [4Fe-4S] cluster site. The tract at residues 164–184 is disordered; that stretch reads HEREEAAKHALPTHSMKGLLR.

It belongs to the complex I 20 kDa subunit family. As to quaternary structure, NDH-1 is composed of 14 different subunits. Subunits NuoB, C, D, E, F, and G constitute the peripheral sector of the complex. Requires [4Fe-4S] cluster as cofactor.

The protein localises to the cell membrane. The catalysed reaction is a quinone + NADH + 5 H(+)(in) = a quinol + NAD(+) + 4 H(+)(out). In terms of biological role, NDH-1 shuttles electrons from NADH, via FMN and iron-sulfur (Fe-S) centers, to quinones in the respiratory chain. The immediate electron acceptor for the enzyme in this species is believed to be a menaquinone. Couples the redox reaction to proton translocation (for every two electrons transferred, four hydrogen ions are translocated across the cytoplasmic membrane), and thus conserves the redox energy in a proton gradient. This is NADH-quinone oxidoreductase subunit B from Acidothermus cellulolyticus (strain ATCC 43068 / DSM 8971 / 11B).